A 489-amino-acid polypeptide reads, in one-letter code: Glutamyl-tRNA(Gln) amidotransferase subunit A (489 aa).

Active-site charge relay system residues include Lys-75 and Ser-150. The Acyl-ester intermediate role is filled by Ser-174.

It belongs to the amidase family. GatA subfamily. In terms of assembly, heterotrimer of A, B and C subunits.

The catalysed reaction is L-glutamyl-tRNA(Gln) + L-glutamine + ATP + H2O = L-glutaminyl-tRNA(Gln) + L-glutamate + ADP + phosphate + H(+). Its function is as follows. Allows the formation of correctly charged Gln-tRNA(Gln) through the transamidation of misacylated Glu-tRNA(Gln) in organisms which lack glutaminyl-tRNA synthetase. The reaction takes place in the presence of glutamine and ATP through an activated gamma-phospho-Glu-tRNA(Gln). The sequence is that of Glutamyl-tRNA(Gln) amidotransferase subunit A from Gloeobacter violaceus (strain ATCC 29082 / PCC 7421).